The sequence spans 403 residues: Acetate kinase (403 aa).

Residue Asn13 participates in Mg(2+) binding. Lys20 contacts ATP. Residue Arg94 participates in substrate binding. The Proton donor/acceptor role is filled by Asp153. ATP is bound by residues 213-217 (HLGNG), 288-290 (DFR), and 336-340 (GIGEN). Glu390 is a binding site for Mg(2+).

It belongs to the acetokinase family. Homodimer. Requires Mg(2+) as cofactor. Mn(2+) serves as cofactor.

It localises to the cytoplasm. The catalysed reaction is acetate + ATP = acetyl phosphate + ADP. The protein operates within metabolic intermediate biosynthesis; acetyl-CoA biosynthesis; acetyl-CoA from acetate: step 1/2. Functionally, catalyzes the formation of acetyl phosphate from acetate and ATP. Can also catalyze the reverse reaction. This chain is Acetate kinase, found in Buchnera aphidicola subsp. Schizaphis graminum (strain Sg).